Consider the following 277-residue polypeptide: S-formylglutathione hydrolase FrmB (277 aa).

Residues S145, D221, and H254 each act as charge relay system in the active site.

This sequence belongs to the esterase D family.

The catalysed reaction is S-formylglutathione + H2O = formate + glutathione + H(+). Its function is as follows. Serine hydrolase involved in the detoxification of formaldehyde. Hydrolyzes S-formylglutathione to glutathione and formate. In Escherichia coli O9:H4 (strain HS), this protein is S-formylglutathione hydrolase FrmB (frmB).